The following is a 255-amino-acid chain: Hydroxyacylglutathione hydrolase (255 aa).

Residues His-56, His-58, Asp-60, His-61, His-114, Asp-133, and His-171 each contribute to the Zn(2+) site.

Belongs to the metallo-beta-lactamase superfamily. Glyoxalase II family. In terms of assembly, monomer. Zn(2+) is required as a cofactor.

It catalyses the reaction an S-(2-hydroxyacyl)glutathione + H2O = a 2-hydroxy carboxylate + glutathione + H(+). It functions in the pathway secondary metabolite metabolism; methylglyoxal degradation; (R)-lactate from methylglyoxal: step 2/2. Its function is as follows. Thiolesterase that catalyzes the hydrolysis of S-D-lactoyl-glutathione to form glutathione and D-lactic acid. This chain is Hydroxyacylglutathione hydrolase, found in Chelativorans sp. (strain BNC1).